The following is a 492-amino-acid chain: MHSLDEPLDLKLSISKLRAAREKRERIGANARKRSVHHELMIRDDGTTVITPICSSPPPGFRYRDGDSPPFSSPPIVDLSLSPPSGTDSPSRSSLSPDRAAGDTLIDNPLLRCGGDSASSPFQFFLPLGSGLQLPPSMFMSPPKENRLSLEFTEQKQLVCQWAKCNRLFELLQELVDHVNDFHVKPEKDAGYCCHWEGCARRGRGFNARYKMLIHIRTHTNERPHCCPTCHKSFSRLENLKIHNRSHTGEKPYMCPYEGCNKRYSNSSDRFKHTRTHYVDKPYYCKMPGCQKRYTDPSSLRKHIKAHGHFISHQQRQLLKIHQPPKLPATGDSNYTNGTQLIIPNPAAIFGSQSLPIPLTPGPLDLSSLACSSVASALAGLPNPMLTLAGSPLNLAKGSLLSQAYSAAGLGLPLISLVTSGKVENEKRPKGQRGDSSERTDGSKLRPGSIEGLSLLPRGVLDLSPGVGSESLLPGWVVIPPGSVLLKPAVVN.

The segment at 49–101 (VITPICSSPPPGFRYRDGDSPPFSSPPIVDLSLSPPSGTDSPSRSSLSPDRAA) is disordered. The segment at 69–129 (PPFSSPPIVD…SPFQFFLPLG (61 aa)) is transcription activation. Low complexity predominate over residues 82–97 (SPPSGTDSPSRSSLSP). The tract at residues 138–161 (MFMSPPKENRLSLEFTEQKQLVCQ) is transcription repression. A C2H2-type 1 zinc finger spans residues 158-183 (LVCQWAKCNRLFELLQELVDHVNDFH). The C2H2-type 2; degenerate zinc finger occupies 192 to 219 (YCCHWEGCARRGRGFNARYKMLIHIRTH). C2H2-type zinc fingers lie at residues 225–247 (HCCP…NRSH), 253–277 (YMCP…TRTH), and 283–307 (YYCK…IKAH). Positions 423–444 (VENEKRPKGQRGDSSERTDGSK) are enriched in basic and acidic residues. Residues 423–450 (VENEKRPKGQRGDSSERTDGSKLRPGSI) form a disordered region.

The protein belongs to the GLI C2H2-type zinc-finger protein family.

The protein localises to the nucleus speckle. It is found in the cytoplasm. Functionally, can act either as a transcription repressor or as a transcription activator, depending on the cell context. May be involved in neuron differentiation. The polypeptide is Zinc finger protein GLIS2 (glis2) (Xenopus laevis (African clawed frog)).